The following is a 282-amino-acid chain: 3-methyl-2-oxobutanoate hydroxymethyltransferase (282 aa).

Residues Asp-46 and Asp-85 each contribute to the Mg(2+) site. 3-methyl-2-oxobutanoate is bound by residues Asp-46–Ser-47, Asp-85, and Lys-115. Glu-117 serves as a coordination point for Mg(2+). Glu-184 functions as the Proton acceptor in the catalytic mechanism.

This sequence belongs to the PanB family. In terms of assembly, homodecamer; pentamer of dimers. It depends on Mg(2+) as a cofactor.

The protein localises to the cytoplasm. The enzyme catalyses 3-methyl-2-oxobutanoate + (6R)-5,10-methylene-5,6,7,8-tetrahydrofolate + H2O = 2-dehydropantoate + (6S)-5,6,7,8-tetrahydrofolate. It functions in the pathway cofactor biosynthesis; (R)-pantothenate biosynthesis; (R)-pantoate from 3-methyl-2-oxobutanoate: step 1/2. Catalyzes the reversible reaction in which hydroxymethyl group from 5,10-methylenetetrahydrofolate is transferred onto alpha-ketoisovalerate to form ketopantoate. In Alkaliphilus metalliredigens (strain QYMF), this protein is 3-methyl-2-oxobutanoate hydroxymethyltransferase.